Consider the following 102-residue polypeptide: Large ribosomal subunit protein bL21 (102 aa).

It belongs to the bacterial ribosomal protein bL21 family. As to quaternary structure, part of the 50S ribosomal subunit. Contacts protein L20.

Functionally, this protein binds to 23S rRNA in the presence of protein L20. The polypeptide is Large ribosomal subunit protein bL21 (Staphylococcus aureus).